Reading from the N-terminus, the 443-residue chain is Eukaryotic translation initiation factor 3 subunit E (443 aa).

The region spanning 249-417 (LDLFFNAGFI…GTVVMNHPPS (169 aa)) is the PCI domain.

The protein belongs to the eIF-3 subunit E family. In terms of assembly, component of the eukaryotic translation initiation factor 3 (eIF-3) complex.

It localises to the cytoplasm. Component of the eukaryotic translation initiation factor 3 (eIF-3) complex, which is involved in protein synthesis of a specialized repertoire of mRNAs and, together with other initiation factors, stimulates binding of mRNA and methionyl-tRNAi to the 40S ribosome. The eIF-3 complex specifically targets and initiates translation of a subset of mRNAs involved in cell proliferation. This chain is Eukaryotic translation initiation factor 3 subunit E (int-6), found in Neurospora crassa (strain ATCC 24698 / 74-OR23-1A / CBS 708.71 / DSM 1257 / FGSC 987).